The following is a 554-amino-acid chain: Myo-inositol transporter 1 (554 aa).

The segment covering 1-13 (MGSSTNNTQSKAT) has biased composition (polar residues). Residues 1–57 (MGSSTNNTQSKATPSVLENEVNSSKSSVVSSTSSAKGLLRETTNHGTMETSSVQISE) are disordered. 2 N-linked (GlcNAc...) asparagine glycosylation sites follow: asparagine 6 and asparagine 22. Residues 15-34 (SVLENEVNSSKSSVVSSTSS) are compositionally biased toward low complexity. A compositionally biased stretch (polar residues) spans 44–57 (NHGTMETSSVQISE). A run of 6 helical transmembrane segments spans residues 65–85 (MVLVLTLASSISGFMFGYDTG), 110–130 (FITSATSLGALLGAVVGGVLA), 144–164 (IIFVVGTIIQLAARTVWTMIA), 167–187 (FVLGWGVGIASLIAPLMISEL), 196–216 (LIVTNVIFITGGQLIAYFINW), and 227–247 (VSVGLCMVPPVLQFVLFWFLP). Asparagine 279 is a glycosylation site (N-linked (GlcNAc...) asparagine). A helical transmembrane segment spans residues 313 to 332 (GNFRALILACGLQGIQQFTG). Asparagine 351 is a glycosylation site (N-linked (GlcNAc...) asparagine). The next 5 membrane-spanning stretches (helical) occupy residues 354–374 (AVSIIIAATNFVFTGIAICII), 382–402 (ILLVGMPCMCISLIVCAVAFH), 420–440 (GWGIVVIIGMILYVASYAIGI), 459–479 (IGAMYAACTNWAGSLVIASTF), and 490–510 (GTFSFFAGLCFIAFFFVYFLL).

It belongs to the major facilitator superfamily. Sugar transporter (TC 2.A.1.1) family.

The protein localises to the cell membrane. It carries out the reaction myo-inositol(out) + H(+)(out) = myo-inositol(in) + H(+)(in). Functionally, major transporter for myo-inositol. This chain is Myo-inositol transporter 1, found in Candida albicans (strain SC5314 / ATCC MYA-2876) (Yeast).